Here is a 982-residue protein sequence, read N- to C-terminus: Presequence protease, mitochondrial (982 aa).

The N-terminal 7 residues, 1-7 (MFQIRNY), are a transit peptide targeting the mitochondrion. H84 lines the Zn(2+) pocket. The active-site Proton acceptor is the E87. Zn(2+) is bound at residue H88. The active site involves E160. Residue E185 participates in Zn(2+) binding.

It belongs to the peptidase M16 family. PreP subfamily. In terms of assembly, monomer and homodimer; homodimerization is induced by binding of the substrate. The cofactor is Zn(2+).

It is found in the mitochondrion intermembrane space. The protein resides in the mitochondrion matrix. Degrades mitochondrial transit peptides after their cleavage in the intermembrane space or in the matrix, and presequence peptides; clearance of these peptides is required to keep the presequence processing machinery running. Preferentially cleaves the N-terminal side of paired basic amino acid residues. Also degrades other unstructured peptides. May function as an ATP-dependent peptidase as opposed to a metalloendopeptidase. This Kluyveromyces lactis (strain ATCC 8585 / CBS 2359 / DSM 70799 / NBRC 1267 / NRRL Y-1140 / WM37) (Yeast) protein is Presequence protease, mitochondrial (CYM1).